A 426-amino-acid polypeptide reads, in one-letter code: Transcription factor bHLH60 (426 aa).

2 stretches are compositionally biased toward polar residues: residues 117–137 (QNGNISGETPTSSVPSNSSAN) and 148–172 (TDSSQRLISDSAIENQIPCPNQNNR). Positions 117–201 (QNGNISGETP…SSEENEKLPY (85 aa)) are disordered. Residues 191 to 200 (KSSEENEKLP) are compositionally biased toward basic and acidic residues. A bHLH domain is found at 210–307 (QATDSHSLAE…DEIINHVQSL (98 aa)). The segment at 367-398 (HRQLQQPPTQQWPFDGLNQPVWGREEDQAHGN) is disordered.

As to quaternary structure, homodimer. Expressed constitutively in roots, leaves, stems, and flowers.

It localises to the nucleus. The protein is Transcription factor bHLH60 (BHLH60) of Arabidopsis thaliana (Mouse-ear cress).